The sequence spans 777 residues: Endonuclease MutS2 (777 aa).

328–335 provides a ligand contact to ATP; the sequence is GPNTGGKT. Residues 702 to 777 enclose the Smr domain; that stretch reads LDLRGKRYEE…GSGATIVIFK (76 aa).

Belongs to the DNA mismatch repair MutS family. MutS2 subfamily. In terms of assembly, homodimer. Binds to stalled ribosomes, contacting rRNA.

Endonuclease that is involved in the suppression of homologous recombination and thus may have a key role in the control of bacterial genetic diversity. Functionally, acts as a ribosome collision sensor, splitting the ribosome into its 2 subunits. Detects stalled/collided 70S ribosomes which it binds and splits by an ATP-hydrolysis driven conformational change. Acts upstream of the ribosome quality control system (RQC), a ribosome-associated complex that mediates the extraction of incompletely synthesized nascent chains from stalled ribosomes and their subsequent degradation. Probably generates substrates for RQC. The polypeptide is Endonuclease MutS2 (Streptococcus sanguinis (strain SK36)).